Here is a 1065-residue protein sequence, read N- to C-terminus: DNA polymerase III subunit alpha (1065 aa).

This sequence belongs to the DNA polymerase type-C family. DnaE subfamily. In terms of assembly, DNA polymerase III contains a core (composed of alpha, epsilon and theta chains) that associates with a tau subunit. This core dimerizes to form the PolIII' complex. PolIII' associates with the gamma complex (composed of gamma, delta, delta', psi and chi chains) and with the beta chain to form the complete DNA polymerase III complex.

It is found in the cytoplasm. It catalyses the reaction DNA(n) + a 2'-deoxyribonucleoside 5'-triphosphate = DNA(n+1) + diphosphate. Its function is as follows. DNA polymerase III is a complex, multichain enzyme responsible for most of the replicative synthesis in bacteria. This DNA polymerase also exhibits 3' to 5' exonuclease activity. The alpha chain is the DNA polymerase. The chain is DNA polymerase III subunit alpha (dnaE) from Staphylococcus aureus (strain MSSA476).